Here is a 126-residue protein sequence, read N- to C-terminus: Fluoride-specific ion channel FluC (126 aa).

4 helical membrane passes run 5 to 25 (IAVI…FALW), 34 to 54 (WGTL…LAVF), 67 to 87 (LVIT…GEVV), and 95 to 115 (FGLA…LTWA). Na(+) is bound by residues G74 and T77.

Belongs to the fluoride channel Fluc/FEX (TC 1.A.43) family.

It localises to the cell inner membrane. The catalysed reaction is fluoride(in) = fluoride(out). Na(+) is not transported, but it plays an essential structural role and its presence is essential for fluoride channel function. Fluoride-specific ion channel. Important for reducing fluoride concentration in the cell, thus reducing its toxicity. The sequence is that of Fluoride-specific ion channel FluC from Paracidovorax citrulli (strain AAC00-1) (Acidovorax citrulli).